Reading from the N-terminus, the 173-residue chain is Putative metal-dependent hydrolase BCE33L2441 (173 aa).

The Zn(2+) site is built by His-65, His-156, and His-160.

This sequence belongs to the metal hydrolase YfiT family. Homodimer. Zn(2+) serves as cofactor.

It is found in the cytoplasm. Possible metal-dependent hydrolase. This Bacillus cereus (strain ZK / E33L) protein is Putative metal-dependent hydrolase BCE33L2441.